Reading from the N-terminus, the 206-residue chain is Large ribosomal subunit protein eL13y (206 aa).

The segment at 182 to 206 (LERTNKRHAGARAKRAADAEKEEKK) is disordered. Over residues 186–195 (NKRHAGARAK) the composition is skewed to basic residues. Residues 196-206 (RAADAEKEEKK) show a composition bias toward basic and acidic residues.

This sequence belongs to the eukaryotic ribosomal protein eL13 family.

The sequence is that of Large ribosomal subunit protein eL13y from Brassica napus (Rape).